We begin with the raw amino-acid sequence, 616 residues long: Dihydroxy-acid dehydratase (616 aa).

Asp81 is a binding site for Mg(2+). Cys122 is a [2Fe-2S] cluster binding site. Positions 123 and 124 each coordinate Mg(2+). Residue Lys124 is modified to N6-carboxylysine. Cys195 is a [2Fe-2S] cluster binding site. Glu491 serves as a coordination point for Mg(2+). Ser517 functions as the Proton acceptor in the catalytic mechanism.

Belongs to the IlvD/Edd family. Homodimer. Requires [2Fe-2S] cluster as cofactor. It depends on Mg(2+) as a cofactor.

The enzyme catalyses (2R)-2,3-dihydroxy-3-methylbutanoate = 3-methyl-2-oxobutanoate + H2O. It catalyses the reaction (2R,3R)-2,3-dihydroxy-3-methylpentanoate = (S)-3-methyl-2-oxopentanoate + H2O. The protein operates within amino-acid biosynthesis; L-isoleucine biosynthesis; L-isoleucine from 2-oxobutanoate: step 3/4. It functions in the pathway amino-acid biosynthesis; L-valine biosynthesis; L-valine from pyruvate: step 3/4. Functionally, functions in the biosynthesis of branched-chain amino acids. Catalyzes the dehydration of (2R,3R)-2,3-dihydroxy-3-methylpentanoate (2,3-dihydroxy-3-methylvalerate) into 2-oxo-3-methylpentanoate (2-oxo-3-methylvalerate) and of (2R)-2,3-dihydroxy-3-methylbutanoate (2,3-dihydroxyisovalerate) into 2-oxo-3-methylbutanoate (2-oxoisovalerate), the penultimate precursor to L-isoleucine and L-valine, respectively. This Escherichia coli (strain SMS-3-5 / SECEC) protein is Dihydroxy-acid dehydratase.